The following is an 800-amino-acid chain: Phenylalanine--tRNA ligase beta subunit (800 aa).

Residues 39-154 (TKDIKNLVVG…EAQVPGTDAL (116 aa)) enclose the tRNA-binding domain. The B5 domain occupies 408 to 483 (AFITPIDITA…RIYGYDDIPS (76 aa)). Mg(2+) contacts are provided by D461, D467, E470, and E471. An FDX-ACB domain is found at 708–800 (PRFPGMSRDI…ALIEQGAVIR (93 aa)).

Belongs to the phenylalanyl-tRNA synthetase beta subunit family. Type 1 subfamily. As to quaternary structure, tetramer of two alpha and two beta subunits. Requires Mg(2+) as cofactor.

Its subcellular location is the cytoplasm. It catalyses the reaction tRNA(Phe) + L-phenylalanine + ATP = L-phenylalanyl-tRNA(Phe) + AMP + diphosphate + H(+). The polypeptide is Phenylalanine--tRNA ligase beta subunit (Staphylococcus aureus (strain USA300)).